The primary structure comprises 396 residues: Inositol polyphosphate 1-phosphatase (396 aa).

Position 54 (aspartate 54) interacts with Li(+). Glutamate 79 is a Mg(2+) binding site. Glutamate 80 lines the Li(+) pocket. Positions 153 and 155 each coordinate Mg(2+). Positions 156, 157, 158, 264, 266, 286, 287, 290, and 308 each coordinate 1D-myo-inositol 1,4-bisphosphate. A Mg(2+)-binding site is contributed by aspartate 313. Serine 314 is modified (phosphoserine).

The protein belongs to the inositol monophosphatase superfamily. Monomer. The cofactor is Mg(2+).

The catalysed reaction is 1D-myo-inositol 1,4-bisphosphate + H2O = 1D-myo-inositol 4-phosphate + phosphate. It catalyses the reaction 1D-myo-inositol 1,3,4-trisphosphate + H2O = 1D-myo-inositol 3,4-bisphosphate + phosphate. It participates in signal transduction; phosphatidylinositol signaling pathway. Inhibited by Li(+). Functionally, mg(2+)-dependent phosphatase that catalyzes the hydrolysis of the 1-position phosphate from inositol 1,4-bisphosphate and inositol 1,3,4-trisphosphate and participates in inositol phosphate metabolism. The chain is Inositol polyphosphate 1-phosphatase from Mus musculus (Mouse).